Consider the following 883-residue polypeptide: Bifunctional heparan sulfate N-deacetylase/N-sulfotransferase 2 (883 aa).

Over 1–18 (MLQLWKVVRPARQLELHR) the chain is Cytoplasmic. Residues 19 to 39 (LILLLIAFSLGSMGFLAYYVS) form a helical; Signal-anchor for type II membrane protein membrane-spanning segment. Residues 40–883 (TSPKAKEPLP…REELQHSSLG (844 aa)) lie on the Lumenal side of the membrane. Residues 41–597 (SPKAKEPLPL…KRHKDIWSKE (557 aa)) form a heparan sulfate N-deacetylase 2 region. The disordered stretch occupies residues 49–81 (PLPLGDCSSGGAAGPGPARPPVPPRPPRPPETA). Pro residues predominate over residues 65–78 (PARPPVPPRPPRPP). Residues Asn233, Asn350, and Asn400 are each glycosylated (N-linked (GlcNAc...) asparagine). The tract at residues 598–883 (KTCDRLPKFL…REELQHSSLG (286 aa)) is heparan sulfate N-sulfotransferase 2. The For sulfotransferase activity role is filled by Lys613. 613 to 617 (KTGTT) lines the 3'-phosphoadenylyl sulfate pocket. An N-linked (GlcNAc...) asparagine glycan is attached at Asn666. Position 711 (Ser711) interacts with 3'-phosphoadenylyl sulfate. Residues Asn726 and Asn802 are each glycosylated (N-linked (GlcNAc...) asparagine). A disulfide bond links Cys817 and Cys827. 832–836 (KGRRY) provides a ligand contact to 3'-phosphoadenylyl sulfate.

Belongs to the sulfotransferase 1 family. NDST subfamily. As to quaternary structure, monomer.

It localises to the golgi apparatus membrane. It catalyses the reaction alpha-D-glucosaminyl-[heparan sulfate](n) + 3'-phosphoadenylyl sulfate = N-sulfo-alpha-D-glucosaminyl-[heparan sulfate](n) + adenosine 3',5'-bisphosphate + 2 H(+). It participates in glycan metabolism; heparan sulfate biosynthesis. Its pathway is glycan metabolism; heparin biosynthesis. Essential bifunctional enzyme that catalyzes both the N-deacetylation and the N-sulfation of glucosamine (GlcNAc) of the glycosaminoglycan in heparan sulfate. Modifies the GlcNAc-GlcA disaccharide repeating sugar backbone to make N-sulfated heparosan, a prerequisite substrate for later modifications in heparin biosynthesis. Plays a role in determining the extent and pattern of sulfation of heparan sulfate. Required for the exosomal release of SDCBP, CD63 and syndecan. The chain is Bifunctional heparan sulfate N-deacetylase/N-sulfotransferase 2 (NDST2) from Homo sapiens (Human).